The chain runs to 170 residues: Envelope protein 168 (170 aa).

Residue Met1 is a topological domain, intravirion. A helical membrane pass occupies residues 2-22 (FYPVVQILIGIILVIILILGF). The Virion surface portion of the chain corresponds to 23 to 170 (YHLKRKPPKK…TVMGIARNVL (148 aa)).

The protein belongs to the asfivirus envelope protein p22 family.

The protein localises to the virion membrane. It is found in the host cell membrane. The protein is Envelope protein 168 of African swine fever virus (isolate Tick/South Africa/Pretoriuskop Pr4/1996) (ASFV).